The chain runs to 497 residues: Aluminum-activated malate transporter 10 (497 aa).

Helical transmembrane passes span 66–86 (KVVH…FYYM), 88–108 (PLYD…VVVF), 123–143 (VVAT…ATQS), 148–168 (VFVI…SRFV), 173–193 (ARFD…SVGG), and 210–230 (IAIG…IWAG). Disordered regions lie at residues 413 to 437 (PIET…ERTT) and 476 to 497 (DFEQ…PLSS). The span at 417–436 (NKPEEVPSEEENKVDSEERT) shows a compositional bias: basic and acidic residues. Positions 487–497 (DNNTKQPPLSS) are enriched in polar residues.

The protein belongs to the aromatic acid exporter (TC 2.A.85) family.

It is found in the membrane. In terms of biological role, malate transporter. The sequence is that of Aluminum-activated malate transporter 10 (ALMT10) from Arabidopsis thaliana (Mouse-ear cress).